Reading from the N-terminus, the 264-residue chain is MRQYLDLLEHVIETGTDRGDRTGTGTRSVFGYQMRFDLSQGFPVLTTKKLHLRSIIHELLWFLKGDTNIAYLKEHGVRIWDEWADENGDLGPVYGYQWRSWPTPDGGHIDQIATLVEGLKTNPNSRRHIVSAWNPALVDDMALPPCHCLFQFYVADGKLSCQLYQRSGDIFLGVPFNIASYALLTMMVAQVTGLEAGDFVHTLGDAHIYRNHFEQAQLQLTRTPKPLPRMEINPAVKDLFSFRFEDFELTGYEADSHIKAPVAV.

Arg-21 is a binding site for dUMP. His-51 lines the (6R)-5,10-methylene-5,6,7,8-tetrahydrofolate pocket. Position 126 to 127 (126 to 127) interacts with dUMP; that stretch reads RR. Residue Cys-146 is the Nucleophile of the active site. Residues 166–169, Asn-177, and 207–209 contribute to the dUMP site; these read RSGD and HIY. Asp-169 contributes to the (6R)-5,10-methylene-5,6,7,8-tetrahydrofolate binding site. Ala-263 contributes to the (6R)-5,10-methylene-5,6,7,8-tetrahydrofolate binding site.

It belongs to the thymidylate synthase family. Bacterial-type ThyA subfamily. In terms of assembly, homodimer.

The protein localises to the cytoplasm. The catalysed reaction is dUMP + (6R)-5,10-methylene-5,6,7,8-tetrahydrofolate = 7,8-dihydrofolate + dTMP. It participates in pyrimidine metabolism; dTTP biosynthesis. Catalyzes the reductive methylation of 2'-deoxyuridine-5'-monophosphate (dUMP) to 2'-deoxythymidine-5'-monophosphate (dTMP) while utilizing 5,10-methylenetetrahydrofolate (mTHF) as the methyl donor and reductant in the reaction, yielding dihydrofolate (DHF) as a by-product. This enzymatic reaction provides an intracellular de novo source of dTMP, an essential precursor for DNA biosynthesis. The protein is Thymidylate synthase of Sinorhizobium medicae (strain WSM419) (Ensifer medicae).